The chain runs to 1499 residues: DNA-directed RNA polymerase subunit beta' (1499 aa).

Zn(2+)-binding residues include Cys67, Cys69, Cys82, and Cys85. Positions 497, 499, and 501 each coordinate Mg(2+). Zn(2+)-binding residues include Cys865, Cys940, Cys947, and Cys950. Residues 1475-1499 form a disordered region; that stretch reads YEPSQRAYQEDEYAKKEDGEIAIDD. Basic and acidic residues predominate over residues 1482–1493; that stretch reads YQEDEYAKKEDG.

This sequence belongs to the RNA polymerase beta' chain family. In terms of assembly, the RNAP catalytic core consists of 2 alpha, 1 beta, 1 beta' and 1 omega subunit. When a sigma factor is associated with the core the holoenzyme is formed, which can initiate transcription. The cofactor is Mg(2+). It depends on Zn(2+) as a cofactor.

It carries out the reaction RNA(n) + a ribonucleoside 5'-triphosphate = RNA(n+1) + diphosphate. DNA-dependent RNA polymerase catalyzes the transcription of DNA into RNA using the four ribonucleoside triphosphates as substrates. The chain is DNA-directed RNA polymerase subunit beta' from Chloroherpeton thalassium (strain ATCC 35110 / GB-78).